The sequence spans 200 residues: LHFPL tetraspan subfamily member 6 protein (200 aa).

A signal peptide spans 1–21 (MASSLTCTGVIWALLSFLCAA). The next 3 helical transmembrane spans lie at 84-104 (ICTIVTGLGCGLLLLVALTAL), 123-143 (GIQFLGGLLIGAGCALYPLGW), and 166-186 (IGWAYYCTGAGATAAMLLCTW).

Belongs to the LHFP family. In terms of tissue distribution, pancreas, kidney, skeletal muscle, liver, lung brain, heart, colon, small intestine, uterus, testis, prostate, thymus, spleen and placenta.

The protein resides in the membrane. This Homo sapiens (Human) protein is LHFPL tetraspan subfamily member 6 protein.